Reading from the N-terminus, the 850-residue chain is Coiled-coil and C2 domain-containing protein 1B (850 aa).

Residues 1-10 (MPGPRPRKGP) show a composition bias toward basic residues. 3 disordered regions span residues 1-21 (MPGP…ETAK), 54-73 (LTGE…RAPL), and 114-145 (GVDE…EQPV). A compositionally biased stretch (acidic residues) spans 114–129 (GVDEETGLVDDSEETS). The stretch at 167–213 (LQALLEERIQNYREAAASAKEAGEAAKARRCERGLKTLESQLATVRK) forms a coiled coil. Disordered regions lie at residues 215-277 (GKIC…SDPD) and 436-525 (FAEL…SPSV). Over residues 234–244 (AHQERPSKDSE) the composition is skewed to basic and acidic residues. Residues 440–450 (PVPPGFPPIPG) show a composition bias toward pro residues. Composition is skewed to low complexity over residues 489–502 (PAQA…AQPL) and 511–524 (EPKA…LSPS). Ser-585 carries the phosphoserine modification. Thr-588 carries the phosphothreonine modification. Positions 668–807 (DPPSHHFELK…EKECEIREIM (140 aa)) constitute a C2 domain.

In terms of assembly, interacts with CHMP4B. In terms of tissue distribution, expressed in epididymal sperm but not in testicular sperm (at protein level).

It localises to the nucleus. Its function is as follows. Transcription factor that binds specifically to the DRE (dual repressor element) and represses HTR1A gene transcription in neuronal cells. This is Coiled-coil and C2 domain-containing protein 1B (Cc2d1b) from Rattus norvegicus (Rat).